Reading from the N-terminus, the 700-residue chain is Centrosomal protein of 63 kDa (700 aa).

M1 bears the N-acetylmethionine mark. Coiled coils occupy residues 73–283 (KEVG…ETFI) and 343–533 (LQAE…MCKK). Residues S278, K488, and L492 each carry the phosphoserine modification. The interval 570 to 603 (QYKTGHHSPRGQTLDSIDPVARGPSPLSSHISPG) is disordered. A compositionally biased stretch (low complexity) spans 593–603 (PSPLSSHISPG).

The protein belongs to the CEP63 family. Interacts with CEP152 and CDK1; these interactions recruit both ligands to centrosomes. Interacts with CDK2, CDK5RAP2, WDR62, CEP90, KIAA0753/moonraker and CCDC14. CEP63, CDK5RAP2, CEP152, WDR62 are proposed to form a stepwise assembled complex at the centrosome forming a ring near parental centrioles. Interacts with CCDC57; the interaction is required for their location to proximal end of centrioles. Interacts with FXR1; promoting its stabilization. Post-translationally, polyubiquitinated via 'Lys-48'-linked ubiquitin, leading to its degradation. Deubiquitinated by USP36, promoting its stabilization.

The protein localises to the cytoplasm. It is found in the cytoskeleton. Its subcellular location is the microtubule organizing center. It localises to the centrosome. The protein resides in the centriole. The protein localises to the centriolar satellite. Required for normal spindle assembly. Plays a key role in mother-centriole-dependent centriole duplication; the function also seems to involve CEP152, CDK5RAP2 and WDR62 through a stepwise assembled complex at the centrosome that recruits CDK2 required for centriole duplication. Reported to be required for centrosomal recruitment of CEP152; however, this function has been questioned. Also recruits CDK1 to centrosomes. Plays a role in DNA damage response. Following DNA damage, such as double-strand breaks (DSBs), is removed from centrosomes; this leads to the inactivation of spindle assembly and delay in mitotic progression. Promotes stabilization of FXR1 protein by inhibiting FXR1 ubiquitination. The polypeptide is Centrosomal protein of 63 kDa (Mus musculus (Mouse)).